We begin with the raw amino-acid sequence, 434 residues long: Aspartate--tRNA(Asp/Asn) ligase (434 aa).

L-aspartate is bound at residue Glu-167. Residues 189-192 (QLFK) are aspartate. Arg-211 lines the L-aspartate pocket. Residues 211–213 (RAE), 219–221 (RHL), and Glu-357 each bind ATP. 2 residues coordinate Mg(2+): Glu-357 and Ser-360. Residues Ser-360 and Arg-364 each coordinate L-aspartate. 405–408 (GGER) contributes to the ATP binding site.

Belongs to the class-II aminoacyl-tRNA synthetase family. Type 2 subfamily. In terms of assembly, homodimer. The cofactor is Mg(2+).

It localises to the cytoplasm. The enzyme catalyses tRNA(Asx) + L-aspartate + ATP = L-aspartyl-tRNA(Asx) + AMP + diphosphate. Its function is as follows. Aspartyl-tRNA synthetase with relaxed tRNA specificity since it is able to aspartylate not only its cognate tRNA(Asp) but also tRNA(Asn). Reaction proceeds in two steps: L-aspartate is first activated by ATP to form Asp-AMP and then transferred to the acceptor end of tRNA(Asp/Asn). The polypeptide is Aspartate--tRNA(Asp/Asn) ligase (Haloquadratum walsbyi (strain DSM 16790 / HBSQ001)).